Here is a 150-residue protein sequence, read N- to C-terminus: Ribonuclease H (150 aa).

Residues 1–142 form the RNase H type-1 domain; sequence MSDSVELFTD…ADQLANRGVD (142 aa). 4 residues coordinate Mg(2+): Asp-10, Glu-48, Asp-70, and Asp-134.

It belongs to the RNase H family. Monomer. Requires Mg(2+) as cofactor.

It localises to the cytoplasm. It carries out the reaction Endonucleolytic cleavage to 5'-phosphomonoester.. In terms of biological role, endonuclease that specifically degrades the RNA of RNA-DNA hybrids. This chain is Ribonuclease H, found in Pseudomonas syringae pv. syringae (strain B728a).